Consider the following 472-residue polypeptide: Cannabinoid receptor 1 (472 aa).

The Extracellular portion of the chain corresponds to 1–116; sequence MKSILDGLAD…CFMILNPSQQ (116 aa). The required for mitochondrial localization stretch occupies residues 2–23; sequence KSILDGLADTTFRTITTDLLYV. N-linked (GlcNAc...) asparagine glycosylation is found at Asn-77 and Asn-83. Residues 117–142 form a helical membrane-spanning segment; the sequence is LAIAVLSLTLGTFTVLENLLVLCVIL. The Cytoplasmic segment spans residues 143-154; that stretch reads HSRSLRCRPSYH. A helical transmembrane segment spans residues 155 to 175; it reads FIGSLAVADLLGSVIFVYSFV. Residues 176–187 lie on the Extracellular side of the membrane; it reads DFHVFHRKDSPN. Residues 188 to 212 traverse the membrane as a helical segment; that stretch reads VFLFKLGGVTASFTASVGSLFLTAI. Residues 213–232 lie on the Cytoplasmic side of the membrane; that stretch reads DRYISIHRPLAYKKIVTRPK. A helical membrane pass occupies residues 233–255; the sequence is AVVAFCLMWTIAIVIAVLPLLGW. The Extracellular portion of the chain corresponds to 256 to 273; the sequence is NCKKLQSVCSDIFPLIDE. A helical membrane pass occupies residues 274–299; that stretch reads TYLMFWIGVTSVLLLFIVYAYMYILW. Topologically, residues 300 to 344 are cytoplasmic; sequence KAHIHAVRMIQRGTQKSIIIHTSEDGKVQVTRPDQARMDIRLAKT. A helical transmembrane segment spans residues 345-365; it reads LVLILVVLIICWGPLLAIMVY. Residues 366–377 lie on the Extracellular side of the membrane; the sequence is DVFGKMNKLIKT. The chain crosses the membrane as a helical span at residues 378 to 399; the sequence is VFAFCSMLCLLNSTVNPIIYAL. The Cytoplasmic portion of the chain corresponds to 400–472; it reads RSKDLRHAFR…VSTNTSAKAL (73 aa). Cys-415 carries S-palmitoyl cysteine lipidation. A phosphoserine mark is found at Ser-425 and Ser-429.

It belongs to the G-protein coupled receptor 1 family. As to quaternary structure, interacts (via C-terminus) with CNRIP1; this interaction attenuates constitutive, but not agonist-dependent, inhibition of voltage-gated Ca(2+) channels in neurons. Associates with G protein alpha subunits, including G(i) alpha-1/GNAI1, G(i) alpha-3/GNAI3 and G(o)-alpha/GNAO1; palmitoylation is important for interaction with GNAI3 and GNAO1. Palmitoylation at Cys-415 is important for recruitment at plasma membrane and lipid rafts and association with G protein alpha subunits. As to expression, expressed in cerebral arterial muscle cells and cerebral cortex (at protein level).

The protein resides in the cell membrane. It localises to the membrane raft. It is found in the mitochondrion outer membrane. Its subcellular location is the cell projection. The protein localises to the axon. The protein resides in the presynapse. Hemopressin, a peptide derived from hemoglobin subunit alpha (HBA1 and/or HBA2), acts as an antagonist peptide: hemopressin-binding efficiently blocks cannabinoid receptor CNR1 and subsequent signaling. G-protein coupled receptor for endogenous cannabinoids (eCBs), including N-arachidonoylethanolamide (also called anandamide or AEA) and 2-arachidonoylglycerol (2-AG), as well as phytocannabinoids, such as delta(9)-tetrahydrocannabinol (THC). Mediates many cannabinoid-induced effects, acting, among others, on food intake, memory loss, gastrointestinal motility, catalepsy, ambulatory activity, anxiety, chronic pain. Signaling typically involves reduction in cyclic AMP. In the hypothalamus, may have a dual effect on mitochondrial respiration depending upon the agonist dose and possibly upon the cell type. Increases respiration at low doses, while decreases respiration at high doses. At high doses, CNR1 signal transduction involves G-protein alpha-i protein activation and subsequent inhibition of mitochondrial soluble adenylate cyclase, decrease in cyclic AMP concentration, inhibition of protein kinase A (PKA)-dependent phosphorylation of specific subunits of the mitochondrial electron transport system, including NDUFS2. In the hypothalamus, inhibits leptin-induced reactive oxygen species (ROS) formation and mediates cannabinoid-induced increase in SREBF1 and FASN gene expression. In response to cannabinoids, drives the release of orexigenic beta-endorphin, not that of melanocyte-stimulating hormone alpha/alpha-MSH, from hypothalamic POMC neurons, hence promoting food intake. In the hippocampus, regulates cellular respiration and energy production in response to cannabinoids. Involved in cannabinoid-dependent depolarization-induced suppression of inhibition (DSI), a process in which depolarization of CA1 postsynaptic pyramidal neurons mobilizes eCBs, which retrogradely activate presynaptic CB1 receptors, transiently decreasing GABAergic inhibitory neurotransmission. Also reduces excitatory synaptic transmission. In superior cervical ganglions and cerebral vascular smooth muscle cells, inhibits voltage-gated Ca(2+) channels in a constitutive, as well as agonist-dependent manner. In cerebral vascular smooth muscle cells, inhibition of voltage-gated Ca(2+) channels leads to vasodilation and decrease in vascular tone. Induces leptin production in adipocytes and reduces LRP2-mediated leptin clearance in the kidney, hence participating in hyperleptinemia. In adipose tissue, CNR1 signaling leads to increased expression of SREBF1, ACACA and FASN genes. In the liver, activation by endocannabinoids leads to increased de novo lipogenesis and reduced fatty acid catabolism, associated with increased expression of SREBF1/SREBP-1, GCK, ACACA, ACACB and FASN genes. May also affect de novo cholesterol synthesis and HDL-cholesteryl ether uptake. Peripherally modulates energy metabolism. In high carbohydrate diet-induced obesity, may decrease the expression of mitochondrial dihydrolipoyl dehydrogenase/DLD in striated muscles, as well as that of selected glucose/ pyruvate metabolic enzymes, hence affecting energy expenditure through mitochondrial metabolism. In response to cannabinoid anandamide, elicits a pro-inflammatory response in macrophages, which involves NLRP3 inflammasome activation and IL1B and IL18 secretion. In macrophages infiltrating pancreatic islets, this process may participate in the progression of type-2 diabetes and associated loss of pancreatic beta-cells. This is Cannabinoid receptor 1 (CNR1) from Felis catus (Cat).